Consider the following 564-residue polypeptide: Kelch repeat and BTB domain-containing protein 1 (564 aa).

The region spanning cysteine 21–asparagine 88 is the BTB domain. Residues cysteine 123 to serine 219 enclose the BACK domain. 6 Kelch repeats span residues isoleucine 252–asparagine 297, isoleucine 298–glutamate 346, tyrosine 347–glycine 395, isoleucine 397–glycine 441, lysine 442–asparagine 492, and leucine 494–isoleucine 539.

In terms of assembly, interacts (via BTB domain) with host CUL3.

It is found in the host cytoplasm. In terms of biological role, probable substrate-specific adapter of CUL3-containing E3 ubiquitin-protein ligases which mediate the ubiquitination and subsequent proteasomal degradation of host target proteins. The polypeptide is Kelch repeat and BTB domain-containing protein 1 (KBTB1) (Cowpox virus (strain GRI-90 / Grishak) (CPV)).